The following is a 342-amino-acid chain: Methylthioribose-1-phosphate isomerase (342 aa).

Substrate is bound by residues 49-51 (RGA), R86, and Q187. Catalysis depends on D228, which acts as the Proton donor. A substrate-binding site is contributed by 238–239 (NK).

Belongs to the eIF-2B alpha/beta/delta subunits family. MtnA subfamily.

It catalyses the reaction 5-(methylsulfanyl)-alpha-D-ribose 1-phosphate = 5-(methylsulfanyl)-D-ribulose 1-phosphate. It functions in the pathway amino-acid biosynthesis; L-methionine biosynthesis via salvage pathway; L-methionine from S-methyl-5-thio-alpha-D-ribose 1-phosphate: step 1/6. Functionally, catalyzes the interconversion of methylthioribose-1-phosphate (MTR-1-P) into methylthioribulose-1-phosphate (MTRu-1-P). The sequence is that of Methylthioribose-1-phosphate isomerase from Citrobacter koseri (strain ATCC BAA-895 / CDC 4225-83 / SGSC4696).